The following is a 165-amino-acid chain: (2E)-enoyl-[ACP] glycyltransferase (165 aa).

The protein belongs to the FcoT family.

It catalyses the reaction a (3R)-3-[(carboxymethyl)amino]fatty acid + holo-[ACP] + H(+) = a (2E)-enoyl-[ACP] + glycine + H2O. The catalysed reaction is (3R)-3-[(carboxymethyl)amino]butanoate + holo-[ACP] + H(+) = (2E)-butenoyl-[ACP] + glycine + H2O. Its function is as follows. Involved in the biosynthesis of a unique class of isonitrile lipopeptides (INLPs). Catalyzes a Michael addition of glycine to the beta-position of an alpha,beta-unsaturated fatty acyl-[ACP], producing a (3R)-3-[(carboxymethyl)amino]fatty acid. Acts on the (2E)-butenoyl moiety loaded on the acyl-carrier protein ScoB, forming the product (3R)-3-[(carboxymethyl)amino]butanoate released from ScoB. The chain is (2E)-enoyl-[ACP] glycyltransferase from Streptomyces coeruleorubidus.